The chain runs to 131 residues: Small ribosomal subunit protein uS11 (131 aa).

Basic residues predominate over residues 1 to 15 (MAAKTVKKTRRRKER). The disordered stretch occupies residues 1-23 (MAAKTVKKTRRRKERKNVEHGAA).

It belongs to the universal ribosomal protein uS11 family. As to quaternary structure, part of the 30S ribosomal subunit. Interacts with proteins S7 and S18. Binds to IF-3.

Its function is as follows. Located on the platform of the 30S subunit, it bridges several disparate RNA helices of the 16S rRNA. Forms part of the Shine-Dalgarno cleft in the 70S ribosome. This is Small ribosomal subunit protein uS11 from Clostridium beijerinckii (strain ATCC 51743 / NCIMB 8052) (Clostridium acetobutylicum).